Consider the following 204-residue polypeptide: MIRLVVVDNFDSFTYNLVEYFSEQTVEGEPLDIEVRKNTASLDEIRDLDPDAIVISPGPGHPKNDRDVGVTNDVLTELSTEIPTLGVCLGLEAAVYAYGGTIGHAPEPIHGKAFPVDHDGAGVFAGLEDGFPAGRYHSLVATDVPDCFDVSATTDHDGEALVMGVRHRDYPIECVQFHPESVLTGSGHGVVRNFLTAVAGFDVA.

One can recognise a Glutamine amidotransferase type-1 domain in the interval 3-204; it reads RLVVVDNFDS…LTAVAGFDVA (202 aa). 58–60 is a binding site for L-glutamine; it reads GPG. The Nucleophile; for GATase activity role is filled by C88. Residue 138-139 coordinates L-glutamine; the sequence is SL. Residues H178 and E180 each act as for GATase activity in the active site.

As to quaternary structure, heterotetramer consisting of two non-identical subunits: a beta subunit (TrpG) and a large alpha subunit (TrpE).

It carries out the reaction chorismate + L-glutamine = anthranilate + pyruvate + L-glutamate + H(+). It functions in the pathway amino-acid biosynthesis; L-tryptophan biosynthesis; L-tryptophan from chorismate: step 1/5. Its function is as follows. Part of a heterotetrameric complex that catalyzes the two-step biosynthesis of anthranilate, an intermediate in the biosynthesis of L-tryptophan. In the first step, the glutamine-binding beta subunit (TrpG) of anthranilate synthase (AS) provides the glutamine amidotransferase activity which generates ammonia as a substrate that, along with chorismate, is used in the second step, catalyzed by the large alpha subunit of AS (TrpE) to produce anthranilate. In the absence of TrpG, TrpE can synthesize anthranilate directly from chorismate and high concentrations of ammonia. This is Anthranilate synthase component 2 (trpG) from Haloferax volcanii (strain ATCC 29605 / DSM 3757 / JCM 8879 / NBRC 14742 / NCIMB 2012 / VKM B-1768 / DS2) (Halobacterium volcanii).